The chain runs to 98 residues: MTAVEQTADGIRLRIMLQPKASKDAIIGLHDEELKISITAPPVDGAANAHLIKYLSKAFKVPKSAVQLEKGELNRHKQVFIPAPKIIPEAVRQLLDNP.

The protein belongs to the UPF0235 family.

The protein is UPF0235 protein Asuc_1977 of Actinobacillus succinogenes (strain ATCC 55618 / DSM 22257 / CCUG 43843 / 130Z).